Here is a 204-residue protein sequence, read N- to C-terminus: ATP-dependent Clp protease proteolytic subunit (204 aa).

Ser-102 acts as the Nucleophile in catalysis. The active site involves His-127.

Belongs to the peptidase S14 family. As to quaternary structure, fourteen ClpP subunits assemble into 2 heptameric rings which stack back to back to give a disk-like structure with a central cavity, resembling the structure of eukaryotic proteasomes.

Its subcellular location is the cytoplasm. It catalyses the reaction Hydrolysis of proteins to small peptides in the presence of ATP and magnesium. alpha-casein is the usual test substrate. In the absence of ATP, only oligopeptides shorter than five residues are hydrolyzed (such as succinyl-Leu-Tyr-|-NHMec, and Leu-Tyr-Leu-|-Tyr-Trp, in which cleavage of the -Tyr-|-Leu- and -Tyr-|-Trp bonds also occurs).. Cleaves peptides in various proteins in a process that requires ATP hydrolysis. Has a chymotrypsin-like activity. Plays a major role in the degradation of misfolded proteins. This is ATP-dependent Clp protease proteolytic subunit from Neisseria meningitidis serogroup C (strain 053442).